The primary structure comprises 198 residues: MDTARTATIHRVTSETDITIRLDLDGTGQSRIATGIGFFDHMLTALARHGMFDLDIEAKGDLHIDFHHTVEDTGIALGQAFVRAIGDKRGIRRFGHALVPLDEALSEVVADISGRPYLAWAVDFTRDKIGEMDTELFEEFFRAFAMSALVTLHVTQKAGRNCHHIAEASFKAAARALRMATEADPRAAGAIPSTKGVL.

This sequence belongs to the imidazoleglycerol-phosphate dehydratase family.

Its subcellular location is the cytoplasm. It carries out the reaction D-erythro-1-(imidazol-4-yl)glycerol 3-phosphate = 3-(imidazol-4-yl)-2-oxopropyl phosphate + H2O. The protein operates within amino-acid biosynthesis; L-histidine biosynthesis; L-histidine from 5-phospho-alpha-D-ribose 1-diphosphate: step 6/9. This is Imidazoleglycerol-phosphate dehydratase from Gluconacetobacter diazotrophicus (strain ATCC 49037 / DSM 5601 / CCUG 37298 / CIP 103539 / LMG 7603 / PAl5).